We begin with the raw amino-acid sequence, 130 residues long: D-ribose pyranase (130 aa).

H20 acts as the Proton donor in catalysis. Residues D28, H97, and 119 to 121 (YAN) each bind substrate.

It belongs to the RbsD / FucU family. RbsD subfamily. Homodecamer.

It is found in the cytoplasm. The catalysed reaction is beta-D-ribopyranose = beta-D-ribofuranose. The protein operates within carbohydrate metabolism; D-ribose degradation; D-ribose 5-phosphate from beta-D-ribopyranose: step 1/2. Catalyzes the interconversion of beta-pyran and beta-furan forms of D-ribose. The protein is D-ribose pyranase of Heliobacterium modesticaldum (strain ATCC 51547 / Ice1).